A 149-amino-acid polypeptide reads, in one-letter code: Calmodulin (149 aa).

Alanine 2 is subject to N-acetylalanine. EF-hand domains lie at 8 to 43 (EQISEFKEAFSLFDKDGDGTITTKELGTVMRSLGQN), 44 to 79 (PTEAELQDMINEVDADGNGTIDFPEFLTMMARKMRD), 81 to 116 (DSEEEIKEAFKVFDKDGNGYISAAELRHVMTNLGEK), and 117 to 149 (LTDNEVDEMIREADIDGDGQINYEEFVKMMLSK). Residues aspartate 21, aspartate 23, aspartate 25, threonine 27, glutamate 32, aspartate 57, aspartate 59, asparagine 61, threonine 63, glutamate 68, aspartate 94, aspartate 96, asparagine 98, tyrosine 100, glutamate 105, aspartate 130, aspartate 132, aspartate 134, glutamine 136, and glutamate 141 each coordinate Ca(2+).

It belongs to the calmodulin family. In terms of processing, trimethylation of Lys-116 observed in other calmodulins is absent here.

In terms of biological role, calmodulin mediates the control of a large number of enzymes, ion channels and other proteins by Ca(2+). Among the enzymes to be stimulated by the calmodulin-Ca(2+) complex are a number of protein kinases and phosphatases. This Pleurotus cornucopiae (Cornucopia mushroom) protein is Calmodulin (CMD1).